Reading from the N-terminus, the 845-residue chain is MPKAPKQQPPEPEWIGDGESTSPSDKVVKKGKKDKKIKKTFFEELAVEDKQAGEEEKVLKEKEQQQQQQQQQQKKKRDTRKGRRKKDVDDDGEEKELMERLKKLSVPTSDEEDEVPAPKPRGGKKTKGGNVFAALIQDQSEEEEEEEKHPPKPAKPEKNRINKAVSEEQQPALKGKKGKEEKSKGKAKPQNKFAALDNEEEDKEEEIIKEKEPPKQGKEKAKKAEQGSEEEGEGEEEEEEGGESKADDPYAHLSKKEKKKLKKQMEYERQVASLKAANAAENDFSVSQAEMSSRQAMLENASDIKLEKFSISAHGKELFVNADLYIVAGRRYGLVGPNGKGKTTLLKHIANRALSIPPNIDVLLCEQEVVADETPAVQAVLRADTKRLKLLEEERRLQGQLEQGDDTAAERLEKVYEELRATGAAAAEAKARRILAGLGFDPEMQNRPTQKFSGGWRMRVSLARALFMEPTLLMLDEPTNHLDLNAVIWLNNYLQGWRKTLLIVSHDQGFLDDVCTDIIHLDAQRLHYYRGNYMTFKKMYQQKQKELLKQYEKQEKKLKELKAGGKSTKQAEKQTKEALTRKQQKCRRKNQDEESQEAPELLKRPKEYTVRFTFPDPPPLSPPVLGLHGVTFGYQGQKPLFKNLDFGIDMDSRICIVGPNGVGKSTLLLLLTGKLTPTHGEMRKNHRLKIGFFNQQYAEQLRMEETPTEYLQRGFNLPYQDARKCLGRFGLESHAHTIQICKLSGGQKARVVFAELACREPDVLILDEPTNNLDIESIDALGEAINEYKGAVIVVSHDARLITETNCQLWVVEEQSVSQIDGDFEDYKREVLEALGEVMVSRPRE.

Residues 1-261 (MPKAPKQQPP…HLSKKEKKKL (261 aa)) form a disordered region. Residues Ser22 and Ser24 each carry the phosphoserine modification. Residues 29-39 (KKGKKDKKIKK) show a composition bias toward basic residues. The segment covering 47–64 (VEDKQAGEEEKVLKEKEQ) has biased composition (basic and acidic residues). Residues 73-85 (QKKKRDTRKGRRK) are compositionally biased toward basic residues. Residue Ser105 is modified to Phosphoserine. Position 108 is a phosphothreonine (Thr108). 2 positions are modified to phosphoserine; by CK2: Ser109 and Ser140. Over residues 147 to 160 (EKHPPKPAKPEKNR) the composition is skewed to basic and acidic residues. Ser166 is modified (phosphoserine). Positions 206-226 (EIIKEKEPPKQGKEKAKKAEQ) are enriched in basic and acidic residues. Residues 227–241 (GSEEEGEGEEEEEEG) are compositionally biased toward acidic residues. Position 228 is a phosphoserine (Ser228). In terms of domain architecture, ABC transporter 1 spans 304–548 (IKLEKFSISA…MYQQKQKELL (245 aa)). 336 to 343 (GPNGKGKT) is an ATP binding site. A compositionally biased stretch (basic and acidic residues) spans 559–580 (KELKAGGKSTKQAEKQTKEALT). A disordered region spans residues 559–602 (KELKAGGKSTKQAEKQTKEALTRKQQKCRRKNQDEESQEAPELL). Ser595 carries the post-translational modification Phosphoserine. Residues 625 to 840 (LGLHGVTFGY…VLEALGEVMV (216 aa)) form the ABC transporter 2 domain. 658–665 (GPNGVGKS) is a binding site for ATP.

The protein belongs to the ABC transporter superfamily. ABCF family. EF3 subfamily. In terms of assembly, isoform 2 interacts (via N-terminus) with EIF2S1; the interaction is independent of its phosphorylated status. Isoform 2 associates (via both ABC transporter domains) with the ribosomes. Post-translationally, isoform 2 is phosphorylated at phosphoserine and phosphothreonine. Isoform 2 phosphorylation on Ser-109 and Ser-140 by CK2 inhibits association of EIF2 with ribosomes. As to expression, ubiquitous.

Its subcellular location is the cytoplasm. The protein resides in the nucleus. It localises to the nucleoplasm. It is found in the nucleus envelope. In terms of biological role, isoform 2 is required for efficient Cap- and IRES-mediated mRNA translation initiation. Isoform 2 is not involved in the ribosome biogenesis. The sequence is that of ATP-binding cassette sub-family F member 1 (ABCF1) from Homo sapiens (Human).